A 384-amino-acid chain; its full sequence is Cyclohexane-1-carbonyl-CoA dehydrogenase (384 aa).

This sequence belongs to the acyl-CoA dehydrogenase family. In terms of assembly, homotetramer. The cofactor is FAD.

It carries out the reaction cyclohexane-1-carbonyl-CoA + oxidized [electron-transfer flavoprotein] + H(+) = cyclohex-1-ene-1-carbonyl-CoA + reduced [electron-transfer flavoprotein]. Its function is as follows. Mediates the conversion of cyclohexane-1-carbonyl-CoA (ChCoA) into cyclohex-1-ene-1-carbonyl-CoA in biosynthesis of cyclohexane-1-carboxylate, a by-product produced during fermentation of benzoate and crotonate to acetate. This is Cyclohexane-1-carbonyl-CoA dehydrogenase from Syntrophus aciditrophicus (strain SB).